The sequence spans 656 residues: UV-damage endonuclease (656 aa).

7 disordered regions span residues 1–82 (MPSR…GKEQ), 119–146 (PSVV…KEPV), 175–194 (IIEP…RPPA), 241–264 (PLQF…EPQD), 492–515 (EPCD…TLPP), 550–620 (DMVP…GPYN), and 636–656 (KREV…EFDG). Residues 13–32 (TPQSESSTFSSTLDSSAPSP) are compositionally biased toward low complexity. 2 stretches are compositionally biased toward basic and acidic residues: residues 48-82 (SEKD…GKEQ) and 135-146 (TNAEEREAKEPV). The span at 550–561 (DMVPYDRDDENR) shows a compositional bias: basic and acidic residues. The span at 568-579 (APKKKKGGKRKR) shows a compositional bias: basic residues. The segment covering 583–595 (EEAAEPEEVDTAA) has biased composition (acidic residues). Over residues 596–614 (DDVKDAPEGPKEVPEEERA) the composition is skewed to basic and acidic residues. Acidic residues predominate over residues 647–656 (EVEDEGEFDG).

The protein belongs to the uve1/UvsE family. Mg(2+) is required as a cofactor.

Endonuclease for the repair of UV-irradiated DNA. Involved in the excision of cyclobutane pyrimidine dimers (CPD) and 6-4 pyrimidine pyrimidones (6-4PP) which forms the UV damage repair (UVDR) pathway. In Neurospora crassa (strain ATCC 24698 / 74-OR23-1A / CBS 708.71 / DSM 1257 / FGSC 987), this protein is UV-damage endonuclease (mus-18).